The sequence spans 75 residues: Small ribosomal subunit protein bS18 (75 aa).

Belongs to the bacterial ribosomal protein bS18 family. In terms of assembly, part of the 30S ribosomal subunit. Forms a tight heterodimer with protein bS6.

Its function is as follows. Binds as a heterodimer with protein bS6 to the central domain of the 16S rRNA, where it helps stabilize the platform of the 30S subunit. In Rhodobacter capsulatus (strain ATCC BAA-309 / NBRC 16581 / SB1003), this protein is Small ribosomal subunit protein bS18 (rbsR).